Here is a 362-residue protein sequence, read N- to C-terminus: MERITVTLGERSYPITIAAGLFNEPASFLPLKSGDQVMLVTNETLAPLYLDKVRGVLERAGVNVDSVILPDGEQYKSLTVLDTVFTALLKKPHGRDTTLVALGGGVIGDLTGFAAASYQRGVRFIQVPTTLLSQVDSSVGGKTAVNHPLGKNMIGAFYQPASVVVDLDCLKTLPARELASGLAEVIKYGIILDADFFTWLEGNLDALLRLDGPAMAYCIRRCCELKAEVVAADEREAGLRALLNLGHTFGHAIEAEMGYGNWLHGEAVAAGIVMAARASERLGQFSSTDTQRIIALLERAGLPVNGPCEMSAQDYLPHMLRDKKVLAGELRLVLPLAIGKSEVRGGVSHEVVLSAIADCQQA.

NAD(+) contacts are provided by residues 71–76, 105–109, 129–130, Lys-142, Lys-151, and 169–172; these read DGEQYK, GVIGD, TT, and CLKT. The Zn(2+) site is built by Glu-184, His-247, and His-264.

The protein belongs to the sugar phosphate cyclases superfamily. Dehydroquinate synthase family. Requires Co(2+) as cofactor. The cofactor is Zn(2+). NAD(+) serves as cofactor.

Its subcellular location is the cytoplasm. It carries out the reaction 7-phospho-2-dehydro-3-deoxy-D-arabino-heptonate = 3-dehydroquinate + phosphate. Its pathway is metabolic intermediate biosynthesis; chorismate biosynthesis; chorismate from D-erythrose 4-phosphate and phosphoenolpyruvate: step 2/7. Its function is as follows. Catalyzes the conversion of 3-deoxy-D-arabino-heptulosonate 7-phosphate (DAHP) to dehydroquinate (DHQ). The sequence is that of 3-dehydroquinate synthase from Salmonella enteritidis PT4 (strain P125109).